Reading from the N-terminus, the 565-residue chain is Polyadenylate-binding protein 1-A (565 aa).

RRM domains follow at residues 10 to 88 (SSLY…WSQR), 98 to 175 (GNVF…PFKS), 188 to 265 (TNVF…RAQK), and 284 to 362 (VNLY…LAQR). A disordered region spans residues 435–466 (YARGQPRQNGPRQNGGQPRQNGPRPDVSGAQP). The span at 440-454 (PRQNGPRQNGGQPRQ) shows a compositional bias: polar residues. Residues 489–565 (SALNLQSIIN…REALEVLGSN (77 aa)) form the PABC domain.

This sequence belongs to the polyadenylate-binding protein type-1 family.

It is found in the cytoplasm. Its subcellular location is the nucleus. Functionally, binds the poly(A) tail of mRNA. Appears to be an important mediator of the multiple roles of the poly(A) tail in mRNA biogenesis, stability and translation. The chain is Polyadenylate-binding protein 1-A (pabpc1A) from Dictyostelium discoideum (Social amoeba).